The following is a 473-amino-acid chain: Ribulose bisphosphate carboxylase large chain (473 aa).

Residues 1 to 2 (MS) constitute a propeptide that is removed on maturation. P3 bears the N-acetylproline mark. An N6,N6,N6-trimethyllysine modification is found at K14. Substrate is bound by residues N123 and T173. The Proton acceptor role is filled by K175. K177 contacts substrate. Mg(2+) contacts are provided by K201, D203, and E204. K201 carries the post-translational modification N6-carboxylysine. H294 (proton acceptor) is an active-site residue. Residues R295, H327, and S379 each coordinate substrate.

The protein belongs to the RuBisCO large chain family. Type I subfamily. Heterohexadecamer of 8 large chains and 8 small chains; disulfide-linked. The disulfide link is formed within the large subunit homodimers. It depends on Mg(2+) as a cofactor. The disulfide bond which can form in the large chain dimeric partners within the hexadecamer appears to be associated with oxidative stress and protein turnover.

The protein localises to the plastid. It is found in the chloroplast. It carries out the reaction 2 (2R)-3-phosphoglycerate + 2 H(+) = D-ribulose 1,5-bisphosphate + CO2 + H2O. It catalyses the reaction D-ribulose 1,5-bisphosphate + O2 = 2-phosphoglycolate + (2R)-3-phosphoglycerate + 2 H(+). RuBisCO catalyzes two reactions: the carboxylation of D-ribulose 1,5-bisphosphate, the primary event in carbon dioxide fixation, as well as the oxidative fragmentation of the pentose substrate in the photorespiration process. Both reactions occur simultaneously and in competition at the same active site. The protein is Ribulose bisphosphate carboxylase large chain of Vigna unguiculata (Cowpea).